We begin with the raw amino-acid sequence, 126 residues long: Holo-[acyl-carrier-protein] synthase (126 aa).

Residues aspartate 9 and glutamate 58 each coordinate Mg(2+).

This sequence belongs to the P-Pant transferase superfamily. AcpS family. Requires Mg(2+) as cofactor.

The protein resides in the cytoplasm. It catalyses the reaction apo-[ACP] + CoA = holo-[ACP] + adenosine 3',5'-bisphosphate + H(+). Its function is as follows. Transfers the 4'-phosphopantetheine moiety from coenzyme A to a Ser of acyl-carrier-protein. The sequence is that of Holo-[acyl-carrier-protein] synthase from Salmonella newport (strain SL254).